The chain runs to 261 residues: Endomucin (261 aa).

An N-terminal signal peptide occupies residues 1 to 18 (MELLQVTILFLLPSICSS). Residues Asn-19, Asn-28, Asn-98, and Asn-104 are each glycosylated (N-linked (GlcNAc...) asparagine). The Extracellular segment spans residues 19–190 (NSTGVLEAAN…TSATSRSYSS (172 aa)). Composition is skewed to polar residues over residues 118-134 (TLQS…SIKT) and 146-171 (ASPS…SQVI). The interval 118 to 183 (TLQSSKPKTE…EGGKNASTSA (66 aa)) is disordered. Residues Asn-164 and Asn-178 are each glycosylated (N-linked (GlcNAc...) asparagine). A helical membrane pass occupies residues 191–211 (IILPVVIALIVITLSVFVLVG). Topologically, residues 212–261 (LYRMCWKADPGTPENGNDQPQSDKESVKLLTVKTISHESGEHSAQGKTKN) are cytoplasmic. The residue at position 237 (Ser-237) is a Phosphoserine.

Post-translationally, highly O-glycosylated. Sialic acid-rich glycoprotein. As to expression, expressed in heart, kidney and lung.

It is found in the cell membrane. It localises to the membrane. The protein resides in the secreted. In terms of biological role, endothelial sialomucin, also called endomucin or mucin-like sialoglycoprotein, which interferes with the assembly of focal adhesion complexes and inhibits interaction between cells and the extracellular matrix. The sequence is that of Endomucin (EMCN) from Homo sapiens (Human).